Reading from the N-terminus, the 46-residue chain is Viscotoxin-C1 (46 aa).

Disulfide bonds link Cys-3-Cys-40, Cys-4-Cys-32, and Cys-16-Cys-26.

As to quaternary structure, monomer.

Its subcellular location is the secreted. Thionins are small plant proteins which are toxic to animal cells. They seem to exert their toxic effect at the level of the cell membrane. Their precise function is not known. This is Viscotoxin-C1 from Viscum album (European mistletoe).